Consider the following 270-residue polypeptide: tRNA pseudouridine synthase A (270 aa).

Residue Asp60 is the Nucleophile of the active site. The tract at residues 107 to 111 (FHARF) is RNA binding. Tyr118 contacts substrate. The tract at residues 168–172 (QCQSR) is interaction with tRNA.

This sequence belongs to the tRNA pseudouridine synthase TruA family. In terms of assembly, homodimer.

It carries out the reaction uridine(38/39/40) in tRNA = pseudouridine(38/39/40) in tRNA. Formation of pseudouridine at positions 38, 39 and 40 in the anticodon stem and loop of transfer RNAs. The polypeptide is tRNA pseudouridine synthase A (Klebsiella pneumoniae subsp. pneumoniae (strain ATCC 700721 / MGH 78578)).